The primary structure comprises 287 residues: Phosphatidylserine decarboxylase proenzyme (287 aa).

Residues D90, H147, and S252 each act as charge relay system; for autoendoproteolytic cleavage activity in the active site. The active-site Schiff-base intermediate with substrate; via pyruvic acid; for decarboxylase activity is the S252. The residue at position 252 (S252) is a Pyruvic acid (Ser); by autocatalysis.

Belongs to the phosphatidylserine decarboxylase family. PSD-B subfamily. Prokaryotic type I sub-subfamily. In terms of assembly, heterodimer of a large membrane-associated beta subunit and a small pyruvoyl-containing alpha subunit. The cofactor is pyruvate. Is synthesized initially as an inactive proenzyme. Formation of the active enzyme involves a self-maturation process in which the active site pyruvoyl group is generated from an internal serine residue via an autocatalytic post-translational modification. Two non-identical subunits are generated from the proenzyme in this reaction, and the pyruvate is formed at the N-terminus of the alpha chain, which is derived from the carboxyl end of the proenzyme. The autoendoproteolytic cleavage occurs by a canonical serine protease mechanism, in which the side chain hydroxyl group of the serine supplies its oxygen atom to form the C-terminus of the beta chain, while the remainder of the serine residue undergoes an oxidative deamination to produce ammonia and the pyruvoyl prosthetic group on the alpha chain. During this reaction, the Ser that is part of the protease active site of the proenzyme becomes the pyruvoyl prosthetic group, which constitutes an essential element of the active site of the mature decarboxylase.

It localises to the cell membrane. The enzyme catalyses a 1,2-diacyl-sn-glycero-3-phospho-L-serine + H(+) = a 1,2-diacyl-sn-glycero-3-phosphoethanolamine + CO2. Its pathway is phospholipid metabolism; phosphatidylethanolamine biosynthesis; phosphatidylethanolamine from CDP-diacylglycerol: step 2/2. In terms of biological role, catalyzes the formation of phosphatidylethanolamine (PtdEtn) from phosphatidylserine (PtdSer). In Pseudomonas putida (strain GB-1), this protein is Phosphatidylserine decarboxylase proenzyme.